We begin with the raw amino-acid sequence, 258 residues long: UPF0246 protein Asuc_0575 (258 aa).

The protein belongs to the UPF0246 family.

This Actinobacillus succinogenes (strain ATCC 55618 / DSM 22257 / CCUG 43843 / 130Z) protein is UPF0246 protein Asuc_0575.